We begin with the raw amino-acid sequence, 244 residues long: 1-(5-phosphoribosyl)-5-[(5-phosphoribosylamino)methylideneamino] imidazole-4-carboxamide isomerase (244 aa).

Residue Asp-11 is the Proton acceptor of the active site. Asp-132 serves as the catalytic Proton donor.

It belongs to the HisA/HisF family.

The protein localises to the cytoplasm. It catalyses the reaction 1-(5-phospho-beta-D-ribosyl)-5-[(5-phospho-beta-D-ribosylamino)methylideneamino]imidazole-4-carboxamide = 5-[(5-phospho-1-deoxy-D-ribulos-1-ylimino)methylamino]-1-(5-phospho-beta-D-ribosyl)imidazole-4-carboxamide. It functions in the pathway amino-acid biosynthesis; L-histidine biosynthesis; L-histidine from 5-phospho-alpha-D-ribose 1-diphosphate: step 4/9. This is 1-(5-phosphoribosyl)-5-[(5-phosphoribosylamino)methylideneamino] imidazole-4-carboxamide isomerase from Sphingopyxis alaskensis (strain DSM 13593 / LMG 18877 / RB2256) (Sphingomonas alaskensis).